Consider the following 87-residue polypeptide: Small ribosomal subunit protein bS16 (87 aa).

Belongs to the bacterial ribosomal protein bS16 family.

This chain is Small ribosomal subunit protein bS16, found in Onion yellows phytoplasma (strain OY-M).